Here is a 360-residue protein sequence, read N- to C-terminus: Ribosomal RNA small subunit methyltransferase C (360 aa).

It belongs to the methyltransferase superfamily. RsmC family. Monomer.

It is found in the cytoplasm. The catalysed reaction is guanosine(1207) in 16S rRNA + S-adenosyl-L-methionine = N(2)-methylguanosine(1207) in 16S rRNA + S-adenosyl-L-homocysteine + H(+). Specifically methylates the guanine in position 1207 of 16S rRNA in the 30S particle. The polypeptide is Ribosomal RNA small subunit methyltransferase C (Alteromonas mediterranea (strain DSM 17117 / CIP 110805 / LMG 28347 / Deep ecotype)).